The primary structure comprises 376 residues: Putative F-box/FBD/LRR-repeat protein At5g52460 (376 aa).

The F-box domain occupies 16-75; that stretch reads RDEISSLPDDLLIQILLLVPIKDAVGTMILSKRWRYVWTLLPKLEYSDPGDECESVWKFL. LRR repeat units follow at residues 131–154 and 199–224; these read CKTL…VCLP and FAKV…KFLK. Positions 296–348 constitute an FBD domain; it reads CHGTNQGTVPRCLSAHLDEEFVWHGYRGNEEETQLIRYIFANAKCLKKREIST.

The chain is Putative F-box/FBD/LRR-repeat protein At5g52460 (EDA41) from Arabidopsis thaliana (Mouse-ear cress).